Here is a 274-residue protein sequence, read N- to C-terminus: Speedy protein C (274 aa).

Residues H37–R169 are speedy/Ringo box; Required for CDK-binding.

This sequence belongs to the Speedy/Ringo family. In terms of assembly, interacts with CDK1 and CDK2. Interacts with AURKB. In terms of tissue distribution, expressed in a variety of tissues including bone marrow, kidney, small intestine, liver, placenta and testis.

Its subcellular location is the cytoplasm. Promotes progression through the cell cycle via binding and activation of CDK1 and CDK2. Involved in the spindle-assembly checkpoint. Required for recruitment of MAD2L1, BUBR1 and BUB1 to kinetochores. Required for the correct localization of the active form of Aurora B in prometaphase. This Homo sapiens (Human) protein is Speedy protein C.